A 361-amino-acid chain; its full sequence is Glutamate 5-kinase (361 aa).

ATP is bound at residue lysine 14. 3 residues coordinate substrate: serine 54, aspartate 141, and asparagine 153. One can recognise a PUA domain in the interval 277 to 355 (KGAVIINQGA…KGLKPVIHYD (79 aa)).

It belongs to the glutamate 5-kinase family.

It localises to the cytoplasm. It catalyses the reaction L-glutamate + ATP = L-glutamyl 5-phosphate + ADP. Its pathway is amino-acid biosynthesis; L-proline biosynthesis; L-glutamate 5-semialdehyde from L-glutamate: step 1/2. In terms of biological role, catalyzes the transfer of a phosphate group to glutamate to form L-glutamate 5-phosphate. The chain is Glutamate 5-kinase from Chlorobaculum tepidum (strain ATCC 49652 / DSM 12025 / NBRC 103806 / TLS) (Chlorobium tepidum).